The following is a 113-amino-acid chain: Prefoldin subunit beta (113 aa).

Belongs to the prefoldin subunit beta family. As to quaternary structure, heterohexamer of two alpha and four beta subunits.

Its subcellular location is the cytoplasm. Molecular chaperone capable of stabilizing a range of proteins. Seems to fulfill an ATP-independent, HSP70-like function in archaeal de novo protein folding. The polypeptide is Prefoldin subunit beta (Methanococcus vannielii (strain ATCC 35089 / DSM 1224 / JCM 13029 / OCM 148 / SB)).